The sequence spans 1199 residues: Tubulin monoglutamylase TTLL4 (1199 aa).

Residues 1–25 (MASAGTQHYSIGLRQKNSFKQSGPS) are compositionally biased toward polar residues. Disordered stretches follow at residues 1–43 (MASA…RVWP), 472–517 (IQLG…ELVD), and 525–544 (RDENEEEEGDSECSSLSAVS). Positions 477–495 (SEKERPEEARELDSSDRDI) are enriched in basic and acidic residues. Residues 506–517 (AETEDTEEELVD) show a composition bias toward acidic residues. The TTL domain occupies 604–947 (RKLLRWKMST…VLPNAEDIIS (344 aa)). A Phosphoserine modification is found at Ser691. Residues Lys721, 727-728 (RG), 749-752 (QRYL), and 762-764 (KFD) each bind ATP. Position 727 (Arg727) interacts with a protein. An L-glutamate-binding site is contributed by Arg788. 809–810 (TN) contributes to the ATP binding site. Residues Tyr811, Ser812, and Lys833 each coordinate L-glutamate. Residues Asp893, Glu906, and Asn908 each coordinate Mg(2+). Residues 918-1029 (PLDISIKGQM…RGQFERIFPS (112 aa)) form a c-MTBD region region. Lys924 is an L-glutamate binding site. The span at 1130–1141 (GTTPKSKKTQAG) shows a compositional bias: polar residues. The disordered stretch occupies residues 1130–1199 (GTTPKSKKTQ…ISDSLLAVSP (70 aa)). Residues 1151-1160 (SSKDSEDTSK) show a composition bias toward basic and acidic residues. The span at 1164–1192 (LSTQTLPVIKCSGQTSRLSASSTFQSISD) shows a compositional bias: polar residues.

Belongs to the tubulin--tyrosine ligase family. Requires Mg(2+) as cofactor.

Its subcellular location is the cytoplasm. The protein resides in the cell projection. It localises to the cilium. It is found in the cytoskeleton. The protein localises to the cilium basal body. It catalyses the reaction L-glutamyl-[protein] + L-glutamate + ATP = gamma-L-glutamyl-L-glutamyl-[protein] + ADP + phosphate + H(+). In terms of biological role, monoglutamylase which modifies both tubulin and non-tubulin proteins, adding a single glutamate on the gamma-carboxyl group of specific glutamate residues of target proteins. Involved in the side-chain initiation step of the polyglutamylation reaction but not in the elongation step. Preferentially modifies beta-tail tubulin over the alpha-tubulin. Monoglutamylates nucleosome assembly proteins NAP1L1 and NAP1L4. Monoglutamylates nucleotidyltransferase CGAS, leading to inhibition of CGAS catalytic activity, thereby preventing antiviral defense function. Involved in KLF4 glutamylation which impedes its ubiquitination, thereby leading to somatic cell reprogramming, pluripotency maintenance and embryogenesis. The protein is Tubulin monoglutamylase TTLL4 of Homo sapiens (Human).